The sequence spans 117 residues: Large ribosomal subunit protein uL22 (117 aa).

It belongs to the universal ribosomal protein uL22 family. As to quaternary structure, part of the 50S ribosomal subunit.

In terms of biological role, this protein binds specifically to 23S rRNA; its binding is stimulated by other ribosomal proteins, e.g. L4, L17, and L20. It is important during the early stages of 50S assembly. It makes multiple contacts with different domains of the 23S rRNA in the assembled 50S subunit and ribosome. The globular domain of the protein is located near the polypeptide exit tunnel on the outside of the subunit, while an extended beta-hairpin is found that lines the wall of the exit tunnel in the center of the 70S ribosome. This chain is Large ribosomal subunit protein uL22, found in Leptospira biflexa serovar Patoc (strain Patoc 1 / ATCC 23582 / Paris).